A 197-amino-acid chain; its full sequence is Proteasome subunit beta 1 (197 aa).

Residues Met1–Gly6 constitute a propeptide, removed in mature form; by autocatalysis. The Nucleophile role is filled by Thr7.

Belongs to the peptidase T1B family. The 20S proteasome core is composed of 14 alpha and 14 beta subunits that assemble into four stacked heptameric rings, resulting in a barrel-shaped structure. The two inner rings, each composed of seven catalytic beta subunits, are sandwiched by two outer rings, each composed of seven alpha subunits. The catalytic chamber with the active sites is on the inside of the barrel. Has a gated structure, the ends of the cylinder being occluded by the N-termini of the alpha-subunits. Is capped at one or both ends by the proteasome regulatory ATPase, PAN.

The protein localises to the cytoplasm. It catalyses the reaction Cleavage of peptide bonds with very broad specificity.. Its activity is regulated as follows. The formation of the proteasomal ATPase PAN-20S proteasome complex, via the docking of the C-termini of PAN into the intersubunit pockets in the alpha-rings, triggers opening of the gate for substrate entry. Interconversion between the open-gate and close-gate conformations leads to a dynamic regulation of the 20S proteasome proteolysis activity. In terms of biological role, component of the proteasome core, a large protease complex with broad specificity involved in protein degradation. This Pyrococcus horikoshii (strain ATCC 700860 / DSM 12428 / JCM 9974 / NBRC 100139 / OT-3) protein is Proteasome subunit beta 1.